The sequence spans 259 residues: Peptide methionine sulfoxide reductase (259 aa).

The interval 66–90 (TRTPADASMDQSSIAQGPDDDIPAP) is disordered.

It belongs to the MsrA Met sulfoxide reductase family.

The catalysed reaction is L-methionyl-[protein] + [thioredoxin]-disulfide + H2O = L-methionyl-(S)-S-oxide-[protein] + [thioredoxin]-dithiol. The enzyme catalyses [thioredoxin]-disulfide + L-methionine + H2O = L-methionine (S)-S-oxide + [thioredoxin]-dithiol. Its function is as follows. Has an important function as a repair enzyme for proteins that have been inactivated by oxidation. Catalyzes the reversible oxidation-reduction of methionine sulfoxide in proteins to methionine. The polypeptide is Peptide methionine sulfoxide reductase (Lactuca sativa (Garden lettuce)).